Reading from the N-terminus, the 256-residue chain is MRHPVVMGNWKLNGSKEMVVDLLNGLNAELEGVTGVDVAVAPPALFIDLAERTLTEAGSAIILGAQNSDLNNSGAFTGDMSPAMLKEFGATHIIIGHSERREYHNESDEFVAKKFAFLKENGLTPVLCIGESDAQNEAGETMAVCARQLDAVINTQGVEALEGAIIAYEPIWAIGTGKAATAEDAQRIHAQIRAHIAEKSEEVAKNVVIQYGGSVKPENAEAYFAQPDIDGALVGGAALDAKSFAAIAKAAAKAKA.

Substrate is bound at residue 9-11; the sequence is NWK. His-97 (electrophile) is an active-site residue. The active-site Proton acceptor is the Glu-169. Substrate-binding positions include Gly-175, Ser-214, and 235 to 236; that span reads GG.

It belongs to the triosephosphate isomerase family. Homodimer.

The protein resides in the cytoplasm. The enzyme catalyses D-glyceraldehyde 3-phosphate = dihydroxyacetone phosphate. Its pathway is carbohydrate biosynthesis; gluconeogenesis. It participates in carbohydrate degradation; glycolysis; D-glyceraldehyde 3-phosphate from glycerone phosphate: step 1/1. Functionally, involved in the gluconeogenesis. Catalyzes stereospecifically the conversion of dihydroxyacetone phosphate (DHAP) to D-glyceraldehyde-3-phosphate (G3P). The chain is Triosephosphate isomerase from Aliivibrio salmonicida (strain LFI1238) (Vibrio salmonicida (strain LFI1238)).